The chain runs to 428 residues: FAD-dependent monooxygenase kojA (428 aa).

Residues 52–60 (RLHKGPHYP) and 328–329 (SV) each bind FAD.

This sequence belongs to the aromatic-ring hydroxylase family. Requires FAD as cofactor.

Its function is as follows. Probable FAD-dependent monooxygenase; part of the gene cluster that mediates the biosynthesis of 5-hydroxy-2-hydroxymethyl-1,4-pyrone, also know as kojic acid, a by-product in the fermentation process of malting rice that acts as a chelation agent. Glucose might be converted to kojic acid by a combination of dehydrogenase and dehydratase reactions involving kojA and probably additional enzymes. In Aspergillus flavus (strain ATCC 200026 / FGSC A1120 / IAM 13836 / NRRL 3357 / JCM 12722 / SRRC 167), this protein is FAD-dependent monooxygenase kojA.